The primary structure comprises 574 residues: Bifunctional NAD(P)H-hydrate repair enzyme Nnr (574 aa).

An NAD(P)H-hydrate epimerase region spans residues 1–269; it reads MKPVFSVDQI…SLFERANLKA (269 aa). A YjeF N-terminal domain is found at 10 to 231; the sequence is IRRAENTLFE…DINIAGGGGK (222 aa). The interval 64–68 is NADPHX 1; for epimerase activity; sequence GNGGD. K(+)-binding residues include asparagine 65 and aspartate 123. The tract at residues 127–133 is NADPHX 1; for epimerase activity; it reads GIGGRGG. Aspartate 156 serves as a coordination point for (6S)-NADPHX. K(+) is bound at residue serine 159. The region spanning 277 to 568 is the YjeF C-terminal domain; it reads IGQHFTVLNM…DAIPAATAKV (292 aa). The interval 277-574 is ADP-dependent (S)-NAD(P)H-hydrate dehydratase; the sequence is IGQHFTVLNM…TAKVDLKRIV (298 aa). Glycine 365 provides a ligand contact to (6S)-NADPHX. An NADPHX 2; for dehydratase activity region spans residues 418 to 424; that stretch reads HKGEFER. Residues 461–465 and 480–489 each bind ADP; these read KGKYT and HSWLATPGSG. Residue aspartate 490 coordinates (6S)-NADPHX.

This sequence in the N-terminal section; belongs to the NnrE/AIBP family. It in the C-terminal section; belongs to the NnrD/CARKD family. It depends on K(+) as a cofactor.

The enzyme catalyses (6S)-NADHX + ADP = AMP + phosphate + NADH + H(+). It carries out the reaction (6S)-NADPHX + ADP = AMP + phosphate + NADPH + H(+). It catalyses the reaction (6R)-NADHX = (6S)-NADHX. The catalysed reaction is (6R)-NADPHX = (6S)-NADPHX. Functionally, bifunctional enzyme that catalyzes the epimerization of the S- and R-forms of NAD(P)HX and the dehydration of the S-form of NAD(P)HX at the expense of ADP, which is converted to AMP. This allows the repair of both epimers of NAD(P)HX, a damaged form of NAD(P)H that is a result of enzymatic or heat-dependent hydration. This chain is Bifunctional NAD(P)H-hydrate repair enzyme Nnr (nnr), found in Corynebacterium glutamicum (strain ATCC 13032 / DSM 20300 / JCM 1318 / BCRC 11384 / CCUG 27702 / LMG 3730 / NBRC 12168 / NCIMB 10025 / NRRL B-2784 / 534).